The chain runs to 573 residues: SHC-transforming protein 2 (573 aa).

One can recognise a PID domain in the interval 125–309 (LGPGVSYIVR…LEELAWGDDD (185 aa)). Residues 310–477 (AAADHNYYNS…PTEEQLRQEP (168 aa)) are CH1. A phosphotyrosine mark is found at Y316, Y317, and Y395. The region spanning 478–569 (WYHGRMSRRA…ESELHLRGVV (92 aa)) is the SH2 domain.

In terms of assembly, interacts with the Trk receptors in a phosphotyrosine-dependent manner and MEGF12. Once activated, binds to GRB2. Post-translationally, phosphorylated on tyrosine by the Trk receptors. As to expression, expressed in brain. Expressed at high level in the hypothalamus and at low level in the caudate nucleus.

Functionally, signaling adapter that couples activated growth factor receptors to signaling pathway in neurons. Involved in the signal transduction pathways of neurotrophin-activated Trk receptors in cortical neurons. The polypeptide is SHC-transforming protein 2 (Shc2) (Mus musculus (Mouse)).